Reading from the N-terminus, the 142-residue chain is SLTAKSKSIVKAFWGKIGSRADDIGAEAFGRMLTVYPETKTYFASWSDLSPGSAAVKKHGKTIMGGIAEAVGHIDDLTGGLASLSELHAFKLRVDPANFKILAHNLIVVLALFFPADFTPEVHMAVDKFFQNVASALSEKYR.

The residue at position 1 (Ser-1) is an N-acetylserine. A Globin domain is found at 1-142 (SLTAKSKSIV…VASALSEKYR (142 aa)). His-59 is a binding site for O2. Position 88 (His-88) interacts with heme b.

The protein belongs to the globin family. As to quaternary structure, heterotetramer of two alpha chains and two beta chains. Red blood cells.

In terms of biological role, involved in oxygen transport from gills to the various peripheral tissues. The protein is Hemoglobin subunit alpha (hba) of Electrophorus electricus (Electric eel).